We begin with the raw amino-acid sequence, 91 residues long: Putative regulatory protein PTH_1796 (91 aa).

This sequence belongs to the RemA family.

In Pelotomaculum thermopropionicum (strain DSM 13744 / JCM 10971 / SI), this protein is Putative regulatory protein PTH_1796.